The chain runs to 387 residues: Leucine aminopeptidase 1 (387 aa).

A signal peptide spans 1 to 18 (MKIRAALALSATASGVLA). Positions 19 to 87 (AVVPQQALLN…YPTLHQASNV (69 aa)) are excised as a propeptide. A glycan (N-linked (GlcNAc...) asparagine) is linked at Asn-179. Zn(2+) is bound by residues His-187, Asp-206, Glu-245, and Asp-272. Cys-321 and Cys-325 are disulfide-bonded. His-354 provides a ligand contact to Zn(2+).

This sequence belongs to the peptidase M28 family. M28E subfamily. Monomer. Requires Zn(2+) as cofactor.

It localises to the secreted. Functionally, extracellular aminopeptidase that allows assimilation of proteinaceous substrates. This is Leucine aminopeptidase 1 (lap1) from Aspergillus oryzae (strain ATCC 42149 / RIB 40) (Yellow koji mold).